The chain runs to 534 residues: Pentatricopeptide repeat-containing protein At5g08305 (534 aa).

PPR repeat units lie at residues 41-71 (PFVSQTLSFSALSSSGDVDYAYKFLSKLSDP), 72-106 (PNYGWNFVIRGFSNSRNPEKSISVYIQMLRFGLLP), 107-141 (DHMTYPFLMKSSSRLSNRKLGGSLHCSVVKSGLEW), 142-172 (DLFICNTLIHMYGSFRDQASARKLFDEMPHK), 173-203 (NLVTWNSILDAYAKSGDVVSARLVFDEMSER), 204-238 (DVVTWSSMIDGYVKRGEYNKALEIFDQMMRMGSSK), 240-274 (NEVTMVSVICACAHLGALNRGKTVHRYILDVHLPL), 275-305 (TVILQTSLIDMYAKCGSIGDAWSVFYRASVK), 308-342 (DALMWNAIIGGLASHGFIRESLQLFHKMRESKIDP), 343-377 (DEITFLCLLAACSHGGLVKEAWHFFKSLKESGAEP), and 378-408 (KSEHYACMVDVLSRAGLVKDAHDFISEMPIK). A type E motif region spans residues 413–488 (MLGALLNGCI…IAGHSILDLD (76 aa)). Positions 489-519 (GTRHRFIAHDKTHFHSDKIYAVLQLTGAWMN) are type E(+) motif.

This sequence belongs to the PPR family. PCMP-E subfamily.

The chain is Pentatricopeptide repeat-containing protein At5g08305 (PCMP-E105) from Arabidopsis thaliana (Mouse-ear cress).